The primary structure comprises 318 residues: Ubiquitin-conjugating enzyme E2 J1 (318 aa).

At 1–282 (METRYNLKSP…QGHQPRDNHT (282 aa)) the chain is on the cytoplasmic side. Positions 10–160 (PAVKRLMKEA…GCGSAMKDVL (151 aa)) constitute a UBC core domain. Catalysis depends on Cys91, which acts as the Glycyl thioester intermediate. At Ser184 the chain carries Phosphoserine; by MAPKAPK2. Over residues 229-248 (LQNSSAASFHQPTQPVAKNT) the composition is skewed to polar residues. Residues 229 to 283 (LQNSSAASFHQPTQPVAKNTSMSPRQRRAQQQSQRRLSTSPDVIQGHQPRDNHTD) form a disordered region. Positions 249-268 (SMSPRQRRAQQQSQRRLSTS) are enriched in low complexity. Residues Ser266 and Ser268 each carry the phosphoserine modification. The chain crosses the membrane as a helical; Anchor for type IV membrane protein span at residues 283–303 (DHGGSAVLIVILTLALAALIF). At 304–318 (RRIYLANEYIFDFEL) the chain is on the lumenal side.

It belongs to the ubiquitin-conjugating enzyme family. As to quaternary structure, component of the HRD1 complex, which comprises at least SYNV1/HRD1, DERL1/2, FAM8A1, HERPUD1/HERP, OS9, SEL1L and UBE2J1. Interacts with E3 ligase RNF26. Interacts with E3 ligase RNF133. Phosphorylated at Ser-184 in a cytosolic stress-dependent manner by MAP kinase p38 MAPKAPK2. Post-translationally, phosphorylated UBE2J1 is rapidly ubiquitinated and subsequently degraded by the proteasome. In terms of tissue distribution, expressed in testes.

It localises to the endoplasmic reticulum membrane. The catalysed reaction is S-ubiquitinyl-[E1 ubiquitin-activating enzyme]-L-cysteine + [E2 ubiquitin-conjugating enzyme]-L-cysteine = [E1 ubiquitin-activating enzyme]-L-cysteine + S-ubiquitinyl-[E2 ubiquitin-conjugating enzyme]-L-cysteine.. It functions in the pathway protein modification; protein ubiquitination. Its function is as follows. Catalyzes the covalent attachment of ubiquitin to other proteins. Functions in the selective degradation of misfolded membrane proteins from the endoplasmic reticulum (ERAD) and is essential for cells to recover from ER stress. Plays a role in MAPKAPK2-dependent translational control of TNF-alpha synthesis. Also acts as a platform for perinuclear positioning of the endosomal system by mediating ubiquitination of SQSTM1 through interaction with the E3 ubiquitin-protein ligase RNF26. Plays a role in male fecundity through the interaction with the E3 ubiquitin-protein ligase RNF133. In terms of biological role, (Microbial infection) Promotes Dengue virus RNA replication by negatively regulating IFN-beta signaling and mediating 'Lys-48'-linked ubiquitination on IRF3. This chain is Ubiquitin-conjugating enzyme E2 J1, found in Homo sapiens (Human).